The primary structure comprises 292 residues: NAD kinase (292 aa).

Asp-73 acts as the Proton acceptor in catalysis. Residues 73-74 (DG), 147-148 (NE), His-158, Arg-175, Asp-177, 188-193 (TAYSLS), and Gln-247 contribute to the NAD(+) site.

The protein belongs to the NAD kinase family. Requires a divalent metal cation as cofactor.

The protein localises to the cytoplasm. It carries out the reaction NAD(+) + ATP = ADP + NADP(+) + H(+). Its function is as follows. Involved in the regulation of the intracellular balance of NAD and NADP, and is a key enzyme in the biosynthesis of NADP. Catalyzes specifically the phosphorylation on 2'-hydroxyl of the adenosine moiety of NAD to yield NADP. This is NAD kinase from Photorhabdus laumondii subsp. laumondii (strain DSM 15139 / CIP 105565 / TT01) (Photorhabdus luminescens subsp. laumondii).